Consider the following 162-residue polypeptide: Ribosome maturation factor RimP (162 aa).

The protein belongs to the RimP family.

Its subcellular location is the cytoplasm. Functionally, required for maturation of 30S ribosomal subunits. The protein is Ribosome maturation factor RimP of Ralstonia pickettii (strain 12J).